A 286-amino-acid polypeptide reads, in one-letter code: MTIFAKDKLIAYGQLMRLDKPIGTLLLLWPTLWALYLAEKAMPTLSVLAIFICGVFLMRSAGCVINDYADRHIDGKVKRTSLRPLSTGRATPREAKWLFIVLVFCSFLLVLCLNLYTIGLSVIAVILAFIYPFMKRYTHLPQFFLGAAFGWSIPMAYGATIEALPLECWLLFIANLSWTVAYDTQYAMVDRDDDLRIGVKSTAILFAQYDNKIIALLQIITLIFLFSVGYLSQLNNRYFIVLAIAGLFFVYQCRLTKNRDRASCFNAFLNNNYFGLTVFIAVLFGI.

Transmembrane regions (helical) follow at residues 22-42 (IGTL…EKAM), 45-65 (LSVL…GCVI), 98-118 (LFIV…LYTI), 143-163 (FFLG…TIEA), 213-233 (IIAL…YLSQ), 238-255 (YFIV…QCRL), and 266-286 (NAFL…LFGI).

This sequence belongs to the UbiA prenyltransferase family. Mg(2+) serves as cofactor.

It is found in the cell inner membrane. It carries out the reaction all-trans-octaprenyl diphosphate + 4-hydroxybenzoate = 4-hydroxy-3-(all-trans-octaprenyl)benzoate + diphosphate. Its pathway is cofactor biosynthesis; ubiquinone biosynthesis. Its function is as follows. Catalyzes the prenylation of para-hydroxybenzoate (PHB) with an all-trans polyprenyl group. Mediates the second step in the final reaction sequence of ubiquinone-8 (UQ-8) biosynthesis, which is the condensation of the polyisoprenoid side chain with PHB, generating the first membrane-bound Q intermediate 3-octaprenyl-4-hydroxybenzoate. This Histophilus somni (strain 129Pt) (Haemophilus somnus) protein is 4-hydroxybenzoate octaprenyltransferase.